The primary structure comprises 212 residues: uncharacterized protein (212 aa).

S-adenosyl-L-methionine contacts are provided by G53, E74, and D97.

Belongs to the methyltransferase superfamily. YrrT family.

Its function is as follows. Could be a S-adenosyl-L-methionine-dependent methyltransferase. This is an uncharacterized protein from Bacillus cereus (strain ATCC 14579 / DSM 31 / CCUG 7414 / JCM 2152 / NBRC 15305 / NCIMB 9373 / NCTC 2599 / NRRL B-3711).